Reading from the N-terminus, the 697-residue chain is Elongation factor G 2 (697 aa).

Positions 5 to 280 (SKYRNIGIFA…AVVDYLPDPV (276 aa)) constitute a tr-type G domain. GTP-binding positions include 14–21 (AHVDAGKT), 78–82 (DTPGH), and 132–135 (NKLD).

The protein belongs to the TRAFAC class translation factor GTPase superfamily. Classic translation factor GTPase family. EF-G/EF-2 subfamily.

The protein resides in the cytoplasm. Catalyzes the GTP-dependent ribosomal translocation step during translation elongation. During this step, the ribosome changes from the pre-translocational (PRE) to the post-translocational (POST) state as the newly formed A-site-bound peptidyl-tRNA and P-site-bound deacylated tRNA move to the P and E sites, respectively. Catalyzes the coordinated movement of the two tRNA molecules, the mRNA and conformational changes in the ribosome. The chain is Elongation factor G 2 from Shewanella frigidimarina (strain NCIMB 400).